Here is a 313-residue protein sequence, read N- to C-terminus: E3 ubiquitin-protein ligase SGIP1 (313 aa).

The region spanning 16–65 is the F-box domain; that stretch reads REYSKEIPIDLLIEIFSRLSTGDIARCRCVSKIWSSVPRLRDFTELFLKI.

Interacts with SGS3 in cytoplasmic granules.

It is found in the cytoplasmic granule. It catalyses the reaction S-ubiquitinyl-[E2 ubiquitin-conjugating enzyme]-L-cysteine + [acceptor protein]-L-lysine = [E2 ubiquitin-conjugating enzyme]-L-cysteine + N(6)-ubiquitinyl-[acceptor protein]-L-lysine.. Its pathway is protein degradation; proteasomal ubiquitin-dependent pathway. It functions in the pathway protein modification; protein ubiquitination. In terms of biological role, E3 ubiquitin-protein ligase which triggers the ubiquitination and subsequent degradation of SGS3 in response to heat. Involved in the mechanisms necessary for quick response to heat and subsequent heritable transgenerational memory of heat acclimation (global warming) such as early flowering and attenuated immunity; this process includes epigenetic regulation as well as post-transcriptional gene silencing (PTGS). In response to heat, HSFA2 is activated and promotes the expression of REF6 which in turn derepresses HSFA2, thus establishing an inheritable feedback loop able to trigger SGIP1 and subsequent SGIP1-mediated SGS3 degradation; this prevents the biosynthesis of trans-acting siRNA (tasiRNA) and leads to the release of HTT5, which drives early flowering but attenuates immunity. The polypeptide is E3 ubiquitin-protein ligase SGIP1 (Arabidopsis thaliana (Mouse-ear cress)).